Reading from the N-terminus, the 261-residue chain is tRNA pseudouridine synthase A (261 aa).

The active-site Nucleophile is D51. Y109 contacts substrate.

Belongs to the tRNA pseudouridine synthase TruA family. Homodimer.

The enzyme catalyses uridine(38/39/40) in tRNA = pseudouridine(38/39/40) in tRNA. Its function is as follows. Formation of pseudouridine at positions 38, 39 and 40 in the anticodon stem and loop of transfer RNAs. The polypeptide is tRNA pseudouridine synthase A (Shewanella pealeana (strain ATCC 700345 / ANG-SQ1)).